Reading from the N-terminus, the 627-residue chain is Asparagine synthetase domain-containing protein 1 (627 aa).

Cys-2 serves as the catalytic For GATase activity. One can recognise a Glutamine amidotransferase type-2 domain in the interval 2-184; it reads CGICCSVSFS…ASGIFQIDLN (183 aa). In terms of domain architecture, Asparagine synthetase spans 308 to 597; that stretch reads ASKEVLKTCS…GLPASALLPK (290 aa). The segment at 373-404 is disordered; that stretch reads QQNHHEIPSEESSQSPAADEGPGEAEVPDRVT.

The polypeptide is Asparagine synthetase domain-containing protein 1 (Asnsd1) (Mus musculus (Mouse)).